Here is a 137-residue protein sequence, read N- to C-terminus: Large ribosomal subunit protein uL16 (137 aa).

Belongs to the universal ribosomal protein uL16 family. As to quaternary structure, part of the 50S ribosomal subunit.

Its function is as follows. Binds 23S rRNA and is also seen to make contacts with the A and possibly P site tRNAs. The polypeptide is Large ribosomal subunit protein uL16 (Paracoccus denitrificans (strain Pd 1222)).